The primary structure comprises 230 residues: MSDPALIADGYAAADIRAAEAPLLAAGAQLMRVAAAGLARACRALAPDGPVLVLVGAGNNGGDALLAAAELAREGREVGVIRTAGRIHEAGAAQAVAAGVPITSADELDDATLADIARSSALVVDGILGIGTTDSPALRGEGRRVVAALLPVVTAEGGPAVIACDIPSGVGCDDGAVPDPAVLPADVTVTFGAGKAGLMQGPGRALAGRVELVDVGLDLSGATPLVRAAR.

Residues 11–223 (YAAADIRAAE…DVGLDLSGAT (213 aa)) form the YjeF N-terminal domain. 59–63 (NNGGD) is a binding site for (6S)-NADPHX. The K(+) site is built by asparagine 60 and aspartate 125. (6S)-NADPHX-binding positions include 129-137 (GIGTTDSPA) and aspartate 165. Serine 168 serves as a coordination point for K(+).

It belongs to the NnrE/AIBP family. The cofactor is K(+).

It carries out the reaction (6R)-NADHX = (6S)-NADHX. It catalyses the reaction (6R)-NADPHX = (6S)-NADPHX. Functionally, catalyzes the epimerization of the S- and R-forms of NAD(P)HX, a damaged form of NAD(P)H that is a result of enzymatic or heat-dependent hydration. This is a prerequisite for the S-specific NAD(P)H-hydrate dehydratase to allow the repair of both epimers of NAD(P)HX. In Clavibacter michiganensis subsp. michiganensis (strain NCPPB 382), this protein is NAD(P)H-hydrate epimerase.